The sequence spans 95 residues: Protein TusB (95 aa).

This sequence belongs to the DsrH/TusB family. As to quaternary structure, heterohexamer, formed by a dimer of trimers. The hexameric TusBCD complex contains 2 copies each of TusB, TusC and TusD. The TusBCD complex interacts with TusE.

The protein resides in the cytoplasm. Its function is as follows. Part of a sulfur-relay system required for 2-thiolation of 5-methylaminomethyl-2-thiouridine (mnm(5)s(2)U) at tRNA wobble positions. The chain is Protein TusB from Escherichia coli O139:H28 (strain E24377A / ETEC).